We begin with the raw amino-acid sequence, 229 residues long: Ribonuclease 3 (229 aa).

The RNase III domain occupies 5–127; it reads LDRLERKLGY…LIGAIYQDAD (123 aa). Glu-40 is a Mg(2+) binding site. Asp-44 is a catalytic residue. Mg(2+) contacts are provided by Asp-113 and Glu-116. Residue Glu-116 is part of the active site. Positions 154–224 constitute a DRBM domain; the sequence is DPKTRLQEFL…AAAALIALGV (71 aa).

This sequence belongs to the ribonuclease III family. As to quaternary structure, homodimer. The cofactor is Mg(2+).

The protein localises to the cytoplasm. It catalyses the reaction Endonucleolytic cleavage to 5'-phosphomonoester.. Digests double-stranded RNA. Involved in the processing of primary rRNA transcript to yield the immediate precursors to the large and small rRNAs (23S and 16S). Processes some mRNAs, and tRNAs when they are encoded in the rRNA operon. Processes pre-crRNA and tracrRNA of type II CRISPR loci if present in the organism. The sequence is that of Ribonuclease 3 from Pseudomonas entomophila (strain L48).